The chain runs to 185 residues: Ribosome-recycling factor (185 aa).

It belongs to the RRF family.

Its subcellular location is the cytoplasm. Its function is as follows. Responsible for the release of ribosomes from messenger RNA at the termination of protein biosynthesis. May increase the efficiency of translation by recycling ribosomes from one round of translation to another. This is Ribosome-recycling factor from Symbiobacterium thermophilum (strain DSM 24528 / JCM 14929 / IAM 14863 / T).